The following is a 437-amino-acid chain: Transcription factor E2F1 (437 aa).

Disordered regions lie at residues 42 to 87 and 101 to 128; these read ASAP…GRPP and LAESSGPARGRGRHPGKGVKSPGEKSRY. The cyclin A:CDK2 binding stretch occupies residues 67-108; the sequence is ATPQAPRPTPSAPRPALGRPPVKRRLDLETDHQYLAESSGPA. The interval 89–191 is interaction with BIRC2/c-IAP1; sequence KRRLDLETDH…KKSKNHIQWL (103 aa). A DNA-binding region spans residues 110-194; that stretch reads GRGRHPGKGV…KNHIQWLGSH (85 aa). N6-acetyllysine is present on residues Lys117, Lys120, and Lys125. The segment at 153–174 is leucine-zipper; sequence LNWAAEVLKVQKRRIYDITNVL. A DEF box motif is present at residues 158-194; sequence EVLKVQKRRIYDITNVLEGIQLIAKKSKNHIQWLGSH. An N6-methyllysine; by SETD7 modification is found at Lys185. The interval 192-382 is required for interaction with TRIM28; that stretch reads GSHTTVGVGG…RLSPLVAADS (191 aa). The dimerization stretch occupies residues 195–284; it reads TTVGVGGRLE…AVDSSENFQI (90 aa). Residues 300-349 are disordered; that stretch reads EETVGGISPGKTPSQEVTSEEENRATDSATIVSPPPSSPPSSLTTDPSQS. A compositionally biased stretch (low complexity) spans 339-349; sequence PSSLTTDPSQS. Ser364 is subject to Phosphoserine; by CHEK2. Positions 368-437 are transactivation; it reads PVDEDRLSPL…DFGDLTPLDF (70 aa). Ser375 carries the post-translational modification Phosphoserine. Ser403 carries the phosphoserine; by GSK3-beta modification. The segment at 409–426 is RB1 binding; the sequence is LDYHFGLEEGEGIRDLFD. Phosphothreonine; by GSK3-beta is present on Thr433.

It belongs to the E2F/DP family. Component of the DRTF1/E2F transcription factor complex. Forms heterodimers with DP family members. The E2F1 complex binds specifically hypophosphorylated RB1, the interaction represses E2F1-driven transcription. During the cell cycle, RB1 becomes phosphorylated in mid-to-late G1 phase, detaches from the DRTF1/E2F complex, rendering E2F transcriptionally active. Viral oncoproteins, notably E1A, T-antigen and HPV E7, are capable of sequestering RB1, thus releasing the active complex. Interacts with TRRAP, which probably mediates its interaction with histone acetyltransferase complexes, leading to transcription activation. Binds TOPBP1 and EAPP. Interacts with ARID3A. Interacts with TRIM28; the interaction inhibits E2F1 acetylation through recruiting HDAC1 and represses its transcriptional activity. Interaction with KAT2B; the interaction acetylates E2F1 enhancing its DNA-binding and transcriptional activity. Interacts with BIRC2/c-IAP1 (via BIR domains). The complex TFDP1:E2F1 interacts with CEBPA; the interaction prevents CEBPA binding to target genes promoters and represses its transcriptional activity. Interacts with RRP1B. Interacts with HCFC1. Interacts with KMT2E; the interaction is probably indirect and is mediated via HCFC1. Interacts with DCAF5 and L3MBTL3; the interaction requires methylation at Lys-185 and is necessary to target E2F1 for ubiquitination by the CRL4-DCAF5 E3 ubiquitin ligase complex. In terms of assembly, (Microbial infection) Interacts with human cytomegalovirus/HHV-5 protein UL123. In terms of processing, phosphorylated by CDK2 and cyclin A-CDK2 in the S-phase. Phosphorylation at Ser-364 by CHEK2 stabilizes E2F1 upon DNA damage and regulates its effect on transcription and apoptosis. Phosphorylation at Ser-403 by GSK3B promotes interaction with USP11, leading to its deubiquitination and stabilization. Post-translationally, ubiquitinated via 'Lys-63'-linked ubiquitin, leading to its degradation. Deubiquitinated by USP11 following phosphorylation by GSK3B, promoting its stability. Acetylation stimulates DNA-binding. Enhanced under stress conditions such as DNA damage and inhibited by retinoblastoma protein RB1. Regulated by KAP1/TRIM28 which recruits HDAC1 to E2F1 resulting in deacetylation. Acetylated by P/CAF/KAT2B. In terms of processing, methylation at Lys-185 by SETD7 promotes E2F1 ubiquitin-dependent proteasomal degradation.

The protein resides in the nucleus. With respect to regulation, BIRC2/c-IAP1 stimulates its transcriptional activity. Functionally, transcription activator that binds DNA cooperatively with DP proteins through the E2 recognition site, 5'-TTTC[CG]CGC-3' found in the promoter region of a number of genes whose products are involved in cell cycle regulation or in DNA replication. The DRTF1/E2F complex functions in the control of cell-cycle progression from G1 to S phase. E2F1 binds preferentially RB1 in a cell-cycle dependent manner. It can mediate both cell proliferation and TP53/p53-dependent apoptosis. Blocks adipocyte differentiation by binding to specific promoters repressing CEBPA binding to its target gene promoters. Directly activates transcription of PEG10. Positively regulates transcription of RRP1B. This Homo sapiens (Human) protein is Transcription factor E2F1.